A 263-amino-acid chain; its full sequence is ATP synthase subunit a (263 aa).

The propeptide at 1-14 (MYLNNNNNMKYYIN) is removed in mature form. The next 6 helical transmembrane spans lie at 35-57 (FSFI…ILTM), 95-117 (VWGY…NLIS), 129-151 (VVFV…FYTH), 156-178 (FGLF…IELL), 191-213 (LSAN…FNLM), and 228-250 (IAIL…VWCI).

It belongs to the ATPase A chain family. As to quaternary structure, F-type ATPases have 2 components, CF(1) - the catalytic core - and CF(0) - the membrane proton channel. In yeast, the dimeric form of ATP synthase consists of 18 polypeptides: alpha, beta, gamma, delta, epsilon, 4 (B), 5 (OSCP), 6 (A), 8, 9 (C), d, E (Tim11), f, g, h, i, j and k.

The protein resides in the mitochondrion inner membrane. Mitochondrial membrane ATP synthase (F(1)F(0) ATP synthase or Complex V) produces ATP from ADP in the presence of a proton gradient across the membrane which is generated by electron transport complexes of the respiratory chain. F-type ATPases consist of two structural domains, F(1) - containing the extramembraneous catalytic core and F(0) - containing the membrane proton channel, linked together by a central stalk and a peripheral stalk. During catalysis, ATP synthesis in the catalytic domain of F(1) is coupled via a rotary mechanism of the central stalk subunits to proton translocation. Key component of the proton channel; it may play a direct role in the translocation of protons across the membrane. This chain is ATP synthase subunit a (ATP6), found in Eremothecium gossypii (strain ATCC 10895 / CBS 109.51 / FGSC 9923 / NRRL Y-1056) (Yeast).